We begin with the raw amino-acid sequence, 878 residues long: DNA gyrase subunit A (878 aa).

The Topo IIA-type catalytic domain maps to 34-533 (LPDVRDGLKP…NSADINIEDL (500 aa)). Catalysis depends on Tyr122, which acts as the O-(5'-phospho-DNA)-tyrosine intermediate. Residues 560 to 566 (QRRGGKG) carry the GyrA-box motif. The tract at residues 844–878 (DDEELDAIDGSVAEGDEDIAPEAESDDDVADDADE) is disordered. Residues 857–878 (EGDEDIAPEAESDDDVADDADE) are compositionally biased toward acidic residues.

This sequence belongs to the type II topoisomerase GyrA/ParC subunit family. As to quaternary structure, heterotetramer, composed of two GyrA and two GyrB chains. In the heterotetramer, GyrA contains the active site tyrosine that forms a transient covalent intermediate with DNA, while GyrB binds cofactors and catalyzes ATP hydrolysis.

The protein resides in the cytoplasm. It catalyses the reaction ATP-dependent breakage, passage and rejoining of double-stranded DNA.. A type II topoisomerase that negatively supercoils closed circular double-stranded (ds) DNA in an ATP-dependent manner to modulate DNA topology and maintain chromosomes in an underwound state, and also catalyzes the interconversion of other topological isomers of double-stranded DNA rings, including catenanes and knotted rings. Replenishes negative supercoiling downstream of highly transcribed genes to help control overall chromosomal supercoiling density. E.coli makes 15% more negative supercoils in pBR322 plasmid DNA than S.typhimurium; the S.typhimurium GyrB subunit is toxic in E.coli, while the E.coli copy can be expressed in S.typhimurium even though the 2 subunits have 777/804 residues identical. In terms of biological role, negative supercoiling favors strand separation, and DNA replication, transcription, recombination and repair, all of which involve strand separation. Type II topoisomerases break and join 2 DNA strands simultaneously in an ATP-dependent manner. The protein is DNA gyrase subunit A of Salmonella typhimurium (strain LT2 / SGSC1412 / ATCC 700720).